Reading from the N-terminus, the 735-residue chain is Photosystem I P700 chlorophyll a apoprotein A2 (735 aa).

The next 8 helical transmembrane spans lie at 46 to 69 (LFST…FHIA), 135 to 158 (LYQG…LHLQ), 175 to 199 (LNHH…HVAI), 273 to 291 (IAHH…GHMY), 333 to 356 (LHFQ…QHMY), 372 to 398 (AALY…IFFI), 420 to 442 (AIIS…LYVH), and 518 to 536 (FLVH…LILV). [4Fe-4S] cluster contacts are provided by C560 and C569. 2 helical membrane passes run 576 to 597 (AFYL…YWHW) and 644 to 666 (LAVW…MFLI). Residues H655, M663, and Y671 each coordinate chlorophyll a. Residue W672 participates in phylloquinone binding. The chain crosses the membrane as a helical span at residues 708-728 (VVGLAHFSVGYVLTYAAFLIA).

It belongs to the PsaA/PsaB family. As to quaternary structure, the PsaA/B heterodimer binds the P700 chlorophyll special pair and subsequent electron acceptors. PSI consists of a core antenna complex that captures photons, and an electron transfer chain that converts photonic excitation into a charge separation. The cyanobacterial PSI reaction center is composed of one copy each of PsaA,B,C,D,E,F,I,J,K,L,M and X, and forms trimeric complexes. The cofactor is PSI electron transfer chain: 5 chlorophyll a, 1 chlorophyll a', 2 phylloquinones and 3 4Fe-4S clusters. PSI core antenna: 90 chlorophyll a, 22 carotenoids, 3 phospholipids and 1 galactolipid. P700 is a chlorophyll a/chlorophyll a' dimer, A0 is one or more chlorophyll a, A1 is one or both phylloquinones and FX is a shared 4Fe-4S iron-sulfur center..

It is found in the cellular thylakoid membrane. It catalyses the reaction reduced [plastocyanin] + hnu + oxidized [2Fe-2S]-[ferredoxin] = oxidized [plastocyanin] + reduced [2Fe-2S]-[ferredoxin]. Functionally, psaA and PsaB bind P700, the primary electron donor of photosystem I (PSI), as well as the electron acceptors A0, A1 and FX. PSI is a plastocyanin/cytochrome c6-ferredoxin oxidoreductase, converting photonic excitation into a charge separation, which transfers an electron from the donor P700 chlorophyll pair to the spectroscopically characterized acceptors A0, A1, FX, FA and FB in turn. Oxidized P700 is reduced on the lumenal side of the thylakoid membrane by plastocyanin or cytochrome c6. This chain is Photosystem I P700 chlorophyll a apoprotein A2, found in Synechococcus sp. (strain CC9902).